Consider the following 674-residue polypeptide: Secretin GspD (674 aa).

The signal sequence occupies residues 1 to 24 (MKYWLKKSSWLLAGSLLSTPLAMA). The tract at residues 25 to 121 (NEFSASFKGT…VLSGEERANG (97 aa)) is N0. The segment at 123-187 (EVITQVVAVK…EIIRRVDQAG (65 aa)) is N1. Residues 188-261 (DKEIEVVELN…LIKQLDVEMA (74 aa)) form an N2 region. The tract at residues 264-338 (GNNRVVYLKY…AMLEVIGQLD (75 aa)) is N3. The tract at residues 343 to 612 (QVLIEALIVE…VFIKPTIIRD (270 aa)) is secretin. Residues 395–417 (DTTQTKAVYDTNNNFLRNETTTT) are cap gate. Positions 614 to 674 (VTADGITQRK…AFIEQMEAKQ (61 aa)) are s domain.

It belongs to the bacterial secretin family. GSP D subfamily. Forms a cylindrical channel with 15 subunits; unlike E.coli no 16-subunit channels are seen. The closed pentadeacameric channels are 195 Angstroms long and 145 Angstroms in diameter. Each subunit turns in a clock-wise manner around the channel.

Its subcellular location is the cell outer membrane. Involved in a type II secretion system (T2SS, formerly general secretion pathway, GSP) for the export of proteins. Required for secretion of cholera toxin through the outer membrane. This subunit forms the outer membrane channel. The protein is Secretin GspD (epsD) of Vibrio cholerae serotype O1 (strain ATCC 39315 / El Tor Inaba N16961).